The sequence spans 275 residues: Bifunctional protein FolD (275 aa).

Residues 161-163 (GRS), Ser186, and Thr227 contribute to the NADP(+) site.

It belongs to the tetrahydrofolate dehydrogenase/cyclohydrolase family. Homodimer.

It carries out the reaction (6R)-5,10-methylene-5,6,7,8-tetrahydrofolate + NADP(+) = (6R)-5,10-methenyltetrahydrofolate + NADPH. The catalysed reaction is (6R)-5,10-methenyltetrahydrofolate + H2O = (6R)-10-formyltetrahydrofolate + H(+). It participates in one-carbon metabolism; tetrahydrofolate interconversion. Functionally, catalyzes the oxidation of 5,10-methylenetetrahydrofolate to 5,10-methenyltetrahydrofolate and then the hydrolysis of 5,10-methenyltetrahydrofolate to 10-formyltetrahydrofolate. The sequence is that of Bifunctional protein FolD from Parafrankia sp. (strain EAN1pec).